Reading from the N-terminus, the 595-residue chain is Coronatine-insensitive protein homolog 1a (595 aa).

Positions 20–62 constitute an F-box domain; the sequence is WVPDEALHLVMGHVEDPRDREAASRVCRRWHRIDALTRKHVTV. Residues R90, R351, Y389, R412, and R499 each contribute to the jasmonate site.

Interacts with TIFY6A/JAZ3, TIFY6B/JAZ4 and TIFY11D/JAZ12 in a coronatine-dependent manner. Interacts with TIFY9/JAZ5, TIFY10A/JAZ6, TIFY10B/JAZ7, TIFY11A/JAZ9 and TIFY11C/JAZ11 in a coronatine-dependent manner.

Involved in jasmonate (JA) signaling. Required for jasmonate signaling in plant defense responses. Can complement Arabidopsis coi1-1 mutant and restore jasmonate signaling. Required for JA-regulated defense responses to infestation by the leaffolder Cnaphalocrocis medinalis. May act on an initial response of jasmonate-regulated gene expression toward drought tolerance as part of a BHLH148-TIFY11D/JAZ12-COI1A complex. Component of SCF(COI1) E3 ubiquitin ligase complexes, which may mediate the ubiquitination and subsequent proteasomal degradation of target proteins, including TIFY/JAZ family. The chain is Coronatine-insensitive protein homolog 1a from Oryza sativa subsp. indica (Rice).